The chain runs to 597 residues: Centrosomal protein of 70 kDa (597 aa).

Residues 1-23 (MFPVAPKPQDSSQASDRLMTEKQ) are disordered. Coiled coils occupy residues 66–179 (MRQN…QMEV) and 254–326 (TYKG…KKAE). Residues 483–516 (NGVYPRMNEVYTRLGEMNNAVRNLQELLELDSSS) form a TPR repeat.

As to quaternary structure, directly interacts with tubulin-gamma; this interaction determines centrosomal localization.

The protein resides in the cytoplasm. The protein localises to the cytoskeleton. Its subcellular location is the microtubule organizing center. It localises to the centrosome. Plays a role in the organization of both preexisting and nascent microtubules in interphase cells. During mitosis, required for the organization and orientation of the mitotic spindle. The chain is Centrosomal protein of 70 kDa (CEP70) from Pongo abelii (Sumatran orangutan).